Here is a 288-residue protein sequence, read N- to C-terminus: Acetyl-coenzyme A carboxylase carboxyl transferase subunit beta (288 aa).

The 255-residue stretch at 34 to 288 (LFAKCPACKH…HLVSFHGGGQ (255 aa)) folds into the CoA carboxyltransferase N-terminal domain. The Zn(2+) site is built by C38, C41, C56, and C59. The segment at 38–59 (CPACKHMIYKKDLGLAKICPTC) adopts a C4-type zinc-finger fold.

This sequence belongs to the AccD/PCCB family. Acetyl-CoA carboxylase is a heterohexamer composed of biotin carboxyl carrier protein (AccB), biotin carboxylase (AccC) and two subunits each of ACCase subunit alpha (AccA) and ACCase subunit beta (AccD). The cofactor is Zn(2+).

The protein resides in the cytoplasm. It carries out the reaction N(6)-carboxybiotinyl-L-lysyl-[protein] + acetyl-CoA = N(6)-biotinyl-L-lysyl-[protein] + malonyl-CoA. It functions in the pathway lipid metabolism; malonyl-CoA biosynthesis; malonyl-CoA from acetyl-CoA: step 1/1. Functionally, component of the acetyl coenzyme A carboxylase (ACC) complex. Biotin carboxylase (BC) catalyzes the carboxylation of biotin on its carrier protein (BCCP) and then the CO(2) group is transferred by the transcarboxylase to acetyl-CoA to form malonyl-CoA. The chain is Acetyl-coenzyme A carboxylase carboxyl transferase subunit beta from Streptococcus pyogenes serotype M49 (strain NZ131).